A 327-amino-acid chain; its full sequence is Phenylalanine--tRNA ligase alpha subunit (327 aa).

Position 252 (Glu-252) interacts with Mg(2+).

This sequence belongs to the class-II aminoacyl-tRNA synthetase family. Phe-tRNA synthetase alpha subunit type 1 subfamily. Tetramer of two alpha and two beta subunits. The cofactor is Mg(2+).

It localises to the cytoplasm. It carries out the reaction tRNA(Phe) + L-phenylalanine + ATP = L-phenylalanyl-tRNA(Phe) + AMP + diphosphate + H(+). This Salmonella agona (strain SL483) protein is Phenylalanine--tRNA ligase alpha subunit.